Here is a 61-residue protein sequence, read N- to C-terminus: Photosystem II reaction center protein K (61 aa).

Residues 1-24 (MPNILSLTCICFNSVIYPTSFFFA) constitute a propeptide that is removed on maturation. Residues 32–52 (IFNPIVDFMPVIPLFFFLLAF) form a helical membrane-spanning segment.

The protein belongs to the PsbK family. In terms of assembly, PSII is composed of 1 copy each of membrane proteins PsbA, PsbB, PsbC, PsbD, PsbE, PsbF, PsbH, PsbI, PsbJ, PsbK, PsbL, PsbM, PsbT, PsbX, PsbY, PsbZ, Psb30/Ycf12, at least 3 peripheral proteins of the oxygen-evolving complex and a large number of cofactors. It forms dimeric complexes.

The protein localises to the plastid. It is found in the chloroplast thylakoid membrane. In terms of biological role, one of the components of the core complex of photosystem II (PSII). PSII is a light-driven water:plastoquinone oxidoreductase that uses light energy to abstract electrons from H(2)O, generating O(2) and a proton gradient subsequently used for ATP formation. It consists of a core antenna complex that captures photons, and an electron transfer chain that converts photonic excitation into a charge separation. This is Photosystem II reaction center protein K from Triticum aestivum (Wheat).